Here is an 82-residue protein sequence, read N- to C-terminus: Fibroblast growth factor 8 (82 aa).

N-linked (GlcNAc...) asparagine glycosylation occurs at N68.

It belongs to the heparin-binding growth factors family. Monomer. Homodimer. Interacts with FGFR1, FGFR2, FGFR3 and FGFR4. Affinity between fibroblast growth factors (FGFs) and their receptors is increased by heparan sulfate glycosaminoglycans that function as coreceptors.

It is found in the secreted. In terms of biological role, plays an important role in the regulation of embryonic development, cell proliferation, cell differentiation and cell migration. Required for normal brain, eye, ear and limb development during embryogenesis. Required for normal development of the gonadotropin-releasing hormone (GnRH) neuronal system. Plays a role in neurite outgrowth in hippocampal cells. This chain is Fibroblast growth factor 8 (FGF8), found in Canis lupus familiaris (Dog).